The chain runs to 299 residues: UDP-N-acetylenolpyruvoylglucosamine reductase (299 aa).

The 166-residue stretch at G26–S191 folds into the FAD-binding PCMH-type domain. Residue R170 is part of the active site. Catalysis depends on C218, which acts as the Proton donor. E288 is an active-site residue.

It belongs to the MurB family. FAD serves as cofactor.

The protein resides in the cytoplasm. It carries out the reaction UDP-N-acetyl-alpha-D-muramate + NADP(+) = UDP-N-acetyl-3-O-(1-carboxyvinyl)-alpha-D-glucosamine + NADPH + H(+). It functions in the pathway cell wall biogenesis; peptidoglycan biosynthesis. Functionally, cell wall formation. This is UDP-N-acetylenolpyruvoylglucosamine reductase from Protochlamydia amoebophila (strain UWE25).